A 234-amino-acid polypeptide reads, in one-letter code: UstYa family oxidase phomYd' (234 aa).

Positions 1–26 (MEKFFSPSRHNYADLSPTDVPASEES) are disordered. The helical transmembrane segment at 47–69 (VLVNRLLAASTVALVMVSLWLGW) threads the bilayer. Residues 151–155 (HWDHC) carry the HXXHC 1 motif. N-linked (GlcNAc...) asparagine glycosylation occurs at Asn208.

This sequence belongs to the ustYa family.

It is found in the membrane. Its pathway is mycotoxin biosynthesis. Functionally, ustYa family oxidase; part of the gene cluster that mediates the biosynthesis of the phomopsins, a group of hexapeptide mycotoxins which infects lupins and causes lupinosis disease in livestock. Within the pathway, phomYd' catalyzes the desaturation of the Asp moiety into 2,3-dehydroaspartic acid (dAsp). The pathway starts with the processing of the precursor phomA' by several endopeptidases including kexin proteases as well as the cluster-specific S41 family peptidase phomP1 and the oligopeptidase phomG' to produce 10 identical copies of the hexapeptide Tyr-Val-Ile-Pro-Ile-Asp. After being excised from the precursor peptide, the core peptides are cyclized and modified post-translationally by enzymes encoded within the gene cluster. The timing and order of proteolysis of the phomA' precursor and PTMs are still unknown. Two tyrosinase-like enzymes, phomQ1' and phomQ2, catalyze the chlorination and hydroxylation of Tyr, respectively. PhomYb, is proposed to be involved in the construction of the macrocyclic structure. The other 4 ustYa family proteins may be involved in PTMs that generate the unique structure of phomopsin A. PhomYa' is required for the hydroxylation of C-beta of Tyr. PhomYc', phomYd', and phomYe are responsible for the biosynthesis of 2,3-dehydroisoleucine (dIle), 2,3-dehydroaspartic acid (dAsp), and 3,4-dehydroproline (dPro), respectively. While dIle formation by phomYc' is indispensable for the installation of dAsp by phomYd', the order of the other PTMs have not been elucidated yet. Most of the biosynthetic enzymes likely have broad substrate specificity, and thus, there might be a metabolic grid from a precursor to phomopsin A. The enzyme(s) responsible for the biosynthesis of 3,4-dehydrovaline (dVal) have also not been identified yet. Finally, phomM' acts as an S-adenosylmethionine-dependent alpha-N-methyltransferase that catalyzes two successive N-methylation reactions, converting N-desmethyl-phomopsin A to phomopsin A and phomopsin A further to an N,N-dimethylated congener called phomopsin E. This is UstYa family oxidase phomYd' from Diaporthe leptostromiformis (Lupinosis disease fungus).